Reading from the N-terminus, the 211-residue chain is uncharacterized protein (211 aa).

Residues 187 to 211 form a disordered region; it reads LKVSEQENSEAPVSEPKEDEKTKKD. The segment covering 201-211 has biased composition (basic and acidic residues); that stretch reads EPKEDEKTKKD.

This is an uncharacterized protein from Spiroplasma citri.